The sequence spans 140 residues: Large ribosomal subunit protein uL16c (140 aa).

Belongs to the universal ribosomal protein uL16 family. Part of the 50S ribosomal subunit.

It localises to the plastid. The protein resides in the chloroplast. The sequence is that of Large ribosomal subunit protein uL16c from Cyanidium caldarium (Red alga).